The primary structure comprises 703 residues: Protein CASC3 (703 aa).

A disordered region spans residues 1-462 (MADRRRQRAS…APVDSSTSGL (462 aa)). Residues 19–28 (GASGSDSGGS) are compositionally biased toward low complexity. Residues 29–46 (PLRGGGSCSGSAGGGGSG) show a composition bias toward gly residues. Residue Ser-35 is modified to Phosphoserine. 2 stretches are compositionally biased toward acidic residues: residues 74 to 84 (ESECESEDGIE) and 93 to 108 (ESAE…YSEE). Residues 95-131 (AEDSEGEEGEYSEEENSKVELKSEANDAVNSSTKEEK) adopt a coiled-coil conformation. Basic and acidic residues-rich tracts occupy residues 109-119 (ENSKVELKSEA) and 127-138 (TKEEKGEEKPDT). The residue at position 117 (Ser-117) is a Phosphoserine. The segment at 137-283 (DTKSTVTGER…NGERLNKSHR (147 aa)) is necessary for RNA-binding, interaction with MAGOH and localization in nucleus speckles. The sufficient to form the EJC stretch occupies residues 137 to 283 (DTKSTVTGER…NGERLNKSHR (147 aa)). The span at 139–157 (KSTVTGERQSGDGQESTEP) shows a compositional bias: polar residues. At Ser-148 the chain carries Phosphoserine. Positions 158 to 178 (VENKVGKKGPKHLDDDEDRKN) are enriched in basic and acidic residues. Positions 204–210 (PKGRQRK) match the Nuclear localization signal 1 motif. 2 stretches are compositionally biased toward basic and acidic residues: residues 211–234 (LWKD…KSRQ) and 245–255 (RSAHNPDDIKP). Residues 254–262 (KPRRIRKPR) carry the Nuclear localization signal 2 motif. Phosphoserine is present on Ser-265. Residues 341-355 (ETVKHEISYRSRRLE) show a composition bias toward basic and acidic residues. The residue at position 357 (Thr-357) is a Phosphothreonine. Ser-363 and Ser-373 each carry phosphoserine. The tract at residues 377-703 (EEAASEPPAA…PPEVVSRGSS (327 aa)) is necessary for localization in cytoplasmic stress granules. Residues 413–422 (KVGDAVKLAE) are compositionally biased toward basic and acidic residues. Residues 424–445 (VPPPPEGLIPAPPVPETTPTPP) show a composition bias toward pro residues. A Nuclear export signal motif is present at residues 462 to 466 (LEQDV). Phosphoserine is present on Ser-477. 2 disordered regions span residues 492–538 (MPNH…APPV) and 633–703 (PSYP…RGSS). Composition is skewed to pro residues over residues 641–650 (ALPPPPPPHL) and 677–696 (KPSP…PPPE).

Belongs to the CASC3 family. As to quaternary structure, identified in the spliceosome C complex. Component of the mRNA splicing-dependent exon junction complex (EJC), which contains at least CASC3, EIF4A3, MAGOH, NXF1 and RBM8A/Y14. Identified in a complex composed of the EJC core, UPF3B and UPF2. The EJC core can also interact with UPF3A (in vitro). Forms homooligomers. Interacts with STAU in an RNA-dependent manner. Interacts with DHX34; the interaction is RNA-independent. In terms of processing, ADP-ribosylated by tankyrase TNKS and TNKS2. Poly-ADP-ribosylated protein is recognized by RNF146, followed by ubiquitination. Ubiquitinated by RNF146 when poly-ADP-ribosylated, leading to its degradation. As to expression, widely expressed. Overexpressed in breast cancers and metastasis, as well as in gastric cancers.

Its subcellular location is the cytoplasm. The protein localises to the perinuclear region. It is found in the nucleus. The protein resides in the nucleus speckle. It localises to the stress granule. Its subcellular location is the cytoplasmic ribonucleoprotein granule. The protein localises to the cell projection. It is found in the dendrite. Its function is as follows. Required for pre-mRNA splicing as component of the spliceosome. Core component of the splicing-dependent multiprotein exon junction complex (EJC) deposited at splice junctions on mRNAs. The EJC is a dynamic structure consisting of core proteins and several peripheral nuclear and cytoplasmic associated factors that join the complex only transiently either during EJC assembly or during subsequent mRNA metabolism. The EJC marks the position of the exon-exon junction in the mature mRNA for the gene expression machinery and the core components remain bound to spliced mRNAs throughout all stages of mRNA metabolism thereby influencing downstream processes including nuclear mRNA export, subcellular mRNA localization, translation efficiency and nonsense-mediated mRNA decay (NMD). Stimulates the ATPase and RNA-helicase activities of EIF4A3. Plays a role in the stress response by participating in cytoplasmic stress granules assembly and by favoring cell recovery following stress. Component of the dendritic ribonucleoprotein particles (RNPs) in hippocampal neurons. May play a role in mRNA transport. Binds spliced mRNA in sequence-independent manner, 20-24 nucleotides upstream of mRNA exon-exon junctions. Binds poly(G) and poly(U) RNA homomer. In Homo sapiens (Human), this protein is Protein CASC3 (CASC3).